The following is a 469-amino-acid chain: Glutamate--tRNA ligase 2 (469 aa).

Positions 10–20 match the 'HIGH' region motif; it reads PSPTGFLHIGS. The 'KMSKS' region motif lies at 239–243; it reads KLSKR. K242 is an ATP binding site.

Belongs to the class-I aminoacyl-tRNA synthetase family. Glutamate--tRNA ligase type 1 subfamily. As to quaternary structure, monomer.

It localises to the cytoplasm. It carries out the reaction tRNA(Glu) + L-glutamate + ATP = L-glutamyl-tRNA(Glu) + AMP + diphosphate. In terms of biological role, catalyzes the attachment of glutamate to tRNA(Glu) in a two-step reaction: glutamate is first activated by ATP to form Glu-AMP and then transferred to the acceptor end of tRNA(Glu). The protein is Glutamate--tRNA ligase 2 of Rickettsia typhi (strain ATCC VR-144 / Wilmington).